The following is a 404-amino-acid chain: Cysteine desulfurase IscS (404 aa).

Pyridoxal 5'-phosphate is bound by residues 75–76 (AT), asparagine 155, glutamine 183, and 203–205 (SGH). Position 206 is an N6-(pyridoxal phosphate)lysine (lysine 206). Threonine 243 lines the pyridoxal 5'-phosphate pocket. The active-site Cysteine persulfide intermediate is the cysteine 328. Cysteine 328 provides a ligand contact to [2Fe-2S] cluster.

The protein belongs to the class-V pyridoxal-phosphate-dependent aminotransferase family. NifS/IscS subfamily. In terms of assembly, homodimer. Forms a heterotetramer with IscU, interacts with other sulfur acceptors. Requires pyridoxal 5'-phosphate as cofactor.

It localises to the cytoplasm. The catalysed reaction is (sulfur carrier)-H + L-cysteine = (sulfur carrier)-SH + L-alanine. Its pathway is cofactor biosynthesis; iron-sulfur cluster biosynthesis. Its function is as follows. Master enzyme that delivers sulfur to a number of partners involved in Fe-S cluster assembly, tRNA modification or cofactor biosynthesis. Catalyzes the removal of elemental sulfur atoms from cysteine to produce alanine. Functions as a sulfur delivery protein for Fe-S cluster synthesis onto IscU, an Fe-S scaffold assembly protein, as well as other S acceptor proteins. The chain is Cysteine desulfurase IscS from Shewanella oneidensis (strain ATCC 700550 / JCM 31522 / CIP 106686 / LMG 19005 / NCIMB 14063 / MR-1).